The following is a 388-amino-acid chain: LL-diaminopimelate aminotransferase (388 aa).

2 residues coordinate substrate: Tyr16 and Gly41. Residues Tyr70, 104–105 (SK), Tyr129, Asn179, Tyr210, and 239–241 (SLS) contribute to the pyridoxal 5'-phosphate site. Residues Lys105, Tyr129, and Asn179 each coordinate substrate. Lys242 carries the N6-(pyridoxal phosphate)lysine modification. Arg250 is a binding site for pyridoxal 5'-phosphate. Arg368 serves as a coordination point for substrate.

Belongs to the class-I pyridoxal-phosphate-dependent aminotransferase family. LL-diaminopimelate aminotransferase subfamily. Homodimer. It depends on pyridoxal 5'-phosphate as a cofactor.

The catalysed reaction is (2S,6S)-2,6-diaminopimelate + 2-oxoglutarate = (S)-2,3,4,5-tetrahydrodipicolinate + L-glutamate + H2O + H(+). It functions in the pathway amino-acid biosynthesis; L-lysine biosynthesis via DAP pathway; LL-2,6-diaminopimelate from (S)-tetrahydrodipicolinate (aminotransferase route): step 1/1. In terms of biological role, involved in the synthesis of meso-diaminopimelate (m-DAP or DL-DAP), required for both lysine and peptidoglycan biosynthesis. Catalyzes the direct conversion of tetrahydrodipicolinate to LL-diaminopimelate. This is LL-diaminopimelate aminotransferase from Nitratidesulfovibrio vulgaris (strain DP4) (Desulfovibrio vulgaris).